Here is a 443-residue protein sequence, read N- to C-terminus: Adenylosuccinate synthetase (443 aa).

GTP contacts are provided by residues 12–18 (GDEGKGK) and 40–42 (GHT). The active-site Proton acceptor is aspartate 13. Mg(2+) contacts are provided by aspartate 13 and glycine 40. Residues 13–16 (DEGK), 38–41 (NAGH), threonine 128, arginine 142, glutamine 223, threonine 238, and arginine 302 contribute to the IMP site. The Proton donor role is filled by histidine 41. A substrate-binding site is contributed by 298-304 (TTTGRRR). Residues arginine 304, 330–332 (KLD), and 412–414 (SLG) each bind GTP.

The protein belongs to the adenylosuccinate synthetase family. As to quaternary structure, homodimer. Mg(2+) serves as cofactor.

The protein resides in the cytoplasm. It catalyses the reaction IMP + L-aspartate + GTP = N(6)-(1,2-dicarboxyethyl)-AMP + GDP + phosphate + 2 H(+). Its pathway is purine metabolism; AMP biosynthesis via de novo pathway; AMP from IMP: step 1/2. In terms of biological role, plays an important role in the de novo pathway of purine nucleotide biosynthesis. Catalyzes the first committed step in the biosynthesis of AMP from IMP. In Picosynechococcus sp. (strain ATCC 27264 / PCC 7002 / PR-6) (Agmenellum quadruplicatum), this protein is Adenylosuccinate synthetase.